Reading from the N-terminus, the 446-residue chain is Tubulin beta chain (446 aa).

Residues glutamine 11, glutamate 69, serine 138, glycine 142, threonine 143, glycine 144, asparagine 204, and asparagine 226 each contribute to the GTP site. Glutamate 69 serves as a coordination point for Mg(2+). The interval 422-446 (YQQYQDAGIDEEEEEYEEELPEGEE) is disordered. The segment covering 429 to 446 (GIDEEEEEYEEELPEGEE) has biased composition (acidic residues).

This sequence belongs to the tubulin family. As to quaternary structure, dimer of alpha and beta chains. A typical microtubule is a hollow water-filled tube with an outer diameter of 25 nm and an inner diameter of 15 nM. Alpha-beta heterodimers associate head-to-tail to form protofilaments running lengthwise along the microtubule wall with the beta-tubulin subunit facing the microtubule plus end conferring a structural polarity. Microtubules usually have 13 protofilaments but different protofilament numbers can be found in some organisms and specialized cells. The cofactor is Mg(2+).

The protein resides in the cytoplasm. The protein localises to the cytoskeleton. Its function is as follows. Tubulin is the major constituent of microtubules, a cylinder consisting of laterally associated linear protofilaments composed of alpha- and beta-tubulin heterodimers. Microtubules grow by the addition of GTP-tubulin dimers to the microtubule end, where a stabilizing cap forms. Below the cap, tubulin dimers are in GDP-bound state, owing to GTPase activity of alpha-tubulin. The polypeptide is Tubulin beta chain (TUB2) (Gibberella zeae (strain ATCC MYA-4620 / CBS 123657 / FGSC 9075 / NRRL 31084 / PH-1) (Wheat head blight fungus)).